A 141-amino-acid polypeptide reads, in one-letter code: Nucleoside diphosphate kinase (141 aa).

K11, F59, R87, T93, R104, and N114 together coordinate ATP. The Pros-phosphohistidine intermediate role is filled by H117.

This sequence belongs to the NDK family. Homotetramer. It depends on Mg(2+) as a cofactor.

The protein resides in the cytoplasm. The catalysed reaction is a 2'-deoxyribonucleoside 5'-diphosphate + ATP = a 2'-deoxyribonucleoside 5'-triphosphate + ADP. It catalyses the reaction a ribonucleoside 5'-diphosphate + ATP = a ribonucleoside 5'-triphosphate + ADP. Its function is as follows. Major role in the synthesis of nucleoside triphosphates other than ATP. The ATP gamma phosphate is transferred to the NDP beta phosphate via a ping-pong mechanism, using a phosphorylated active-site intermediate. This is Nucleoside diphosphate kinase from Haemophilus influenzae (strain 86-028NP).